The sequence spans 221 residues: Jacalin-related lectin 47 (221 aa).

2 consecutive Jacalin-type lectin domains span residues 1 to 64 (MDSN…YYYP) and 71 to 217 (SEKL…HVLP).

This sequence belongs to the jacalin lectin family.

The protein is Jacalin-related lectin 47 (JAL47) of Arabidopsis thaliana (Mouse-ear cress).